The primary structure comprises 247 residues: Dof zinc finger protein DOF3.5 (247 aa).

The Dof-type zinc-finger motif lies at 25–79; the sequence is PSCPRCGSSNTKFCYYNNYSLTQPRYFCKGCRRYWTKGGSLRNVPVGGGCRKSRR. Zn(2+) contacts are provided by C27, C30, C52, and C55. The interval 70–100 is disordered; the sequence is VGGGCRKSRRPKSSSGNNTKTSLTANSGNPG. The span at 82–94 shows a compositional bias: polar residues; that stretch reads SSSGNNTKTSLTA.

Its subcellular location is the nucleus. Its function is as follows. Transcription factor that binds specifically to a 5'-AA[AG]G-3' consensus core sequence. In Arabidopsis thaliana (Mouse-ear cress), this protein is Dof zinc finger protein DOF3.5 (DOF3.5).